The primary structure comprises 366 residues: S-adenosylmethionine:tRNA ribosyltransferase-isomerase (366 aa).

The protein belongs to the QueA family. In terms of assembly, monomer.

It is found in the cytoplasm. The catalysed reaction is 7-aminomethyl-7-carbaguanosine(34) in tRNA + S-adenosyl-L-methionine = epoxyqueuosine(34) in tRNA + adenine + L-methionine + 2 H(+). It functions in the pathway tRNA modification; tRNA-queuosine biosynthesis. Its function is as follows. Transfers and isomerizes the ribose moiety from AdoMet to the 7-aminomethyl group of 7-deazaguanine (preQ1-tRNA) to give epoxyqueuosine (oQ-tRNA). The chain is S-adenosylmethionine:tRNA ribosyltransferase-isomerase from Methylorubrum populi (strain ATCC BAA-705 / NCIMB 13946 / BJ001) (Methylobacterium populi).